The sequence spans 277 residues: uncharacterized protein (277 aa).

Positions 1-25 are cleaved as a signal peptide; that stretch reads MNKKSIWSKTAFGSLFLLLGTAFTA. Cysteine 26 carries the N-palmitoyl cysteine lipid modification. The S-diacylglycerol cysteine moiety is linked to residue cysteine 26.

Belongs to the MG439/MG440 family.

The protein resides in the cell membrane. This is an uncharacterized protein from Mycoplasma pneumoniae (strain ATCC 29342 / M129 / Subtype 1) (Mycoplasmoides pneumoniae).